The sequence spans 470 residues: 6-phospho-beta-galactosidase 1 (470 aa).

D-galactose 6-phosphate-binding residues include glutamine 23, histidine 120, asparagine 163, glutamate 164, and asparagine 300. Glutamate 164 (proton donor) is an active-site residue. The active-site Nucleophile is the glutamate 378. 4 residues coordinate D-galactose 6-phosphate: serine 434, tryptophan 435, lysine 441, and tyrosine 443.

The protein belongs to the glycosyl hydrolase 1 family.

The enzyme catalyses a 6-phospho-beta-D-galactoside + H2O = D-galactose 6-phosphate + an alcohol. Its pathway is carbohydrate metabolism; lactose degradation; D-galactose 6-phosphate and beta-D-glucose from lactose 6-phosphate: step 1/1. This Streptococcus pneumoniae serotype 4 (strain ATCC BAA-334 / TIGR4) protein is 6-phospho-beta-galactosidase 1.